The chain runs to 305 residues: UPF0450 protein C17orf58 homolog (305 aa).

Positions 1–22 are cleaved as a signal peptide; it reads MTARALWLLCLIVGWSPEAPVA. Residues 18 to 160 form a disordered region; the sequence is EAPVAERKAP…DREPETQSCA (143 aa). The segment covering 21 to 39 has biased composition (basic and acidic residues); sequence VAERKAPPPHRKPDSRETP. 3 disulfides stabilise this stretch: Cys-159–Cys-233, Cys-163–Cys-237, and Cys-174–Cys-304. The 146-residue stretch at 159-304 folds into the NTR domain; sequence CARACSADAD…QVRGATHTQC (146 aa).

This sequence belongs to the UPF0450 family.

This is UPF0450 protein C17orf58 homolog from Mus musculus (Mouse).